Reading from the N-terminus, the 98-residue chain is Acylphosphatase (98 aa).

The region spanning 12-98 (TYYVRVRGVV…ERRFDRFQQQ (87 aa)) is the Acylphosphatase-like domain. Residues R27 and N45 contribute to the active site.

It belongs to the acylphosphatase family.

It carries out the reaction an acyl phosphate + H2O = a carboxylate + phosphate + H(+). The polypeptide is Acylphosphatase (acyP) (Burkholderia ambifaria (strain ATCC BAA-244 / DSM 16087 / CCUG 44356 / LMG 19182 / AMMD) (Burkholderia cepacia (strain AMMD))).